A 304-amino-acid chain; its full sequence is ATP phosphoribosyltransferase (304 aa).

Belongs to the ATP phosphoribosyltransferase family. Long subfamily. It depends on Mg(2+) as a cofactor.

It is found in the cytoplasm. It carries out the reaction 1-(5-phospho-beta-D-ribosyl)-ATP + diphosphate = 5-phospho-alpha-D-ribose 1-diphosphate + ATP. The protein operates within amino-acid biosynthesis; L-histidine biosynthesis; L-histidine from 5-phospho-alpha-D-ribose 1-diphosphate: step 1/9. Its activity is regulated as follows. Feedback inhibited by histidine. In terms of biological role, catalyzes the condensation of ATP and 5-phosphoribose 1-diphosphate to form N'-(5'-phosphoribosyl)-ATP (PR-ATP). Has a crucial role in the pathway because the rate of histidine biosynthesis seems to be controlled primarily by regulation of HisG enzymatic activity. The polypeptide is ATP phosphoribosyltransferase (Xylella fastidiosa (strain 9a5c)).